A 344-amino-acid polypeptide reads, in one-letter code: Dihydroorotase (344 aa).

Zn(2+) contacts are provided by His14 and His16. Substrate is bound by residues 16–18 and Asn42; that span reads HVR. Lys99, His136, and His174 together coordinate Zn(2+). Residue Lys99 is modified to N6-carboxylysine. His136 serves as a coordination point for substrate. Leu219 is a binding site for substrate. Residue Asp247 participates in Zn(2+) binding. The active site involves Asp247. Substrate is bound by residues His251 and Ala263.

The protein belongs to the metallo-dependent hydrolases superfamily. DHOase family. Class II DHOase subfamily. Homodimer. Requires Zn(2+) as cofactor.

It catalyses the reaction (S)-dihydroorotate + H2O = N-carbamoyl-L-aspartate + H(+). It participates in pyrimidine metabolism; UMP biosynthesis via de novo pathway; (S)-dihydroorotate from bicarbonate: step 3/3. Functionally, catalyzes the reversible cyclization of carbamoyl aspartate to dihydroorotate. The polypeptide is Dihydroorotase (Leptothrix cholodnii (strain ATCC 51168 / LMG 8142 / SP-6) (Leptothrix discophora (strain SP-6))).